We begin with the raw amino-acid sequence, 395 residues long: Elongation factor Tu (395 aa).

The tr-type G domain maps to 10-204 (KPHLNIGTIG…AVDNWIEEPV (195 aa)). Residues 19–26 (GHVDHGKT) are G1. A GTP-binding site is contributed by 19–26 (GHVDHGKT). Thr26 is a Mg(2+) binding site. Residues 60 to 64 (GITIN) are G2. Residues 81-84 (DCPG) are G3. Residues 81 to 85 (DCPGH) and 136 to 139 (NKVD) contribute to the GTP site. The interval 136-139 (NKVD) is G4. Positions 174–176 (SAL) are G5.

Belongs to the TRAFAC class translation factor GTPase superfamily. Classic translation factor GTPase family. EF-Tu/EF-1A subfamily. In terms of assembly, monomer.

It localises to the cytoplasm. It catalyses the reaction GTP + H2O = GDP + phosphate + H(+). In terms of biological role, GTP hydrolase that promotes the GTP-dependent binding of aminoacyl-tRNA to the A-site of ribosomes during protein biosynthesis. The polypeptide is Elongation factor Tu (Flavobacterium johnsoniae (strain ATCC 17061 / DSM 2064 / JCM 8514 / BCRC 14874 / CCUG 350202 / NBRC 14942 / NCIMB 11054 / UW101) (Cytophaga johnsonae)).